Here is a 311-residue protein sequence, read N- to C-terminus: Aspartate carbamoyltransferase catalytic subunit (311 aa).

2 residues coordinate carbamoyl phosphate: Arg55 and Thr56. Residue Lys85 participates in L-aspartate binding. Arg106, His135, and Gln138 together coordinate carbamoyl phosphate. Arg168 and Arg230 together coordinate L-aspartate. Carbamoyl phosphate is bound by residues Leu268 and Pro269.

Belongs to the aspartate/ornithine carbamoyltransferase superfamily. ATCase family. As to quaternary structure, heterododecamer (2C3:3R2) of six catalytic PyrB chains organized as two trimers (C3), and six regulatory PyrI chains organized as three dimers (R2).

It catalyses the reaction carbamoyl phosphate + L-aspartate = N-carbamoyl-L-aspartate + phosphate + H(+). The protein operates within pyrimidine metabolism; UMP biosynthesis via de novo pathway; (S)-dihydroorotate from bicarbonate: step 2/3. Its function is as follows. Catalyzes the condensation of carbamoyl phosphate and aspartate to form carbamoyl aspartate and inorganic phosphate, the committed step in the de novo pyrimidine nucleotide biosynthesis pathway. This Salmonella dublin (strain CT_02021853) protein is Aspartate carbamoyltransferase catalytic subunit.